Here is a 156-residue protein sequence, read N- to C-terminus: MTSVIYPGTFDPITNGHLDIIERSAVIFPRVLVAVANSPSKKPLFSLEERVELVRQSVVHLSNVEVFGFSDLLANVIKQHNISAIIRGVRTTTDFEYELQLAALNRLLTKGVDSLFFPPAEKWAFVSSTIVREIYLHGGDVAELVPVPVFNALKAR.

T9 serves as a coordination point for substrate. ATP contacts are provided by residues 9–10 and H17; that span reads TF. Substrate is bound by residues K41, L73, and R87. Residues 88–90, E98, and 123–129 contribute to the ATP site; these read GVR and WAFVSST.

It belongs to the bacterial CoaD family. In terms of assembly, homohexamer. Mg(2+) serves as cofactor.

It localises to the cytoplasm. It carries out the reaction (R)-4'-phosphopantetheine + ATP + H(+) = 3'-dephospho-CoA + diphosphate. The protein operates within cofactor biosynthesis; coenzyme A biosynthesis; CoA from (R)-pantothenate: step 4/5. In terms of biological role, reversibly transfers an adenylyl group from ATP to 4'-phosphopantetheine, yielding dephospho-CoA (dPCoA) and pyrophosphate. This Haemophilus influenzae (strain ATCC 51907 / DSM 11121 / KW20 / Rd) protein is Phosphopantetheine adenylyltransferase.